The primary structure comprises 139 residues: Histone H2A (139 aa).

Residues 1-27 (MSGKGKAGKSGGKAGSETKSMSRSSKA) are disordered. An N-acetylserine modification is found at serine 2. N6-acetyllysine is present on residues lysine 9 and lysine 13. A compositionally biased stretch (polar residues) spans 17-27 (ETKSMSRSSKA). An N5-methylglutamine modification is found at glutamine 110. Residues 119-139 (PELLPSKSSKGKKDEGVSQEL) are disordered. The span at 129-139 (GKKDEGVSQEL) shows a compositional bias: basic and acidic residues. At serine 136 the chain carries Phosphoserine. Positions 136–137 (SQ) match the [ST]-Q motif motif.

It belongs to the histone H2A family. As to quaternary structure, the nucleosome is a histone octamer containing two molecules each of H2A, H2B, H3 and H4 assembled in one H3-H4 heterotetramer and two H2A-H2B heterodimers. The octamer wraps approximately 147 bp of DNA. Phosphorylated to form H2AS128ph (gamma-H2A) in response to DNA double-strand breaks (DSBs) generated by exogenous genotoxic agents and by stalled replication forks. Phosphorylation is dependent on the DNA damage checkpoint kinases MEC1/ATR and TEL1/ATM, spreads on either side of a detected DSB site and may mark the surrounding chromatin for recruitment of proteins required for DNA damage signaling and repair. Gamma-H2A is removed from the DNA prior to the strand invasion-primer extension step of the repair process and subsequently dephosphorylated. Dephosphorylation is necessary for efficient recovery from the DNA damage checkpoint. In terms of processing, acetylated by ESA1 to form H2AK4ac and H2AK7ac.

It localises to the nucleus. Its subcellular location is the chromosome. In terms of biological role, core component of nucleosome which plays a central role in DNA double strand break (DSB) repair. Nucleosomes wrap and compact DNA into chromatin, limiting DNA accessibility to the cellular machineries which require DNA as a template. Histones thereby play a central role in transcription regulation, DNA repair, DNA replication and chromosomal stability. DNA accessibility is regulated via a complex set of post-translational modifications of histones, also called histone code, and nucleosome remodeling. This chain is Histone H2A, found in Agaricus bisporus (White button mushroom).